The chain runs to 474 residues: Trehalose-6-phosphate synthase (474 aa).

Arg-10 provides a ligand contact to D-glucose 6-phosphate. Residue 22–23 coordinates UDP-alpha-D-glucose; that stretch reads GG. Residues Tyr-77 and Asp-131 each contribute to the D-glucose 6-phosphate site. The UDP-alpha-D-glucose site is built by Arg-263 and Lys-268. Arg-301 contributes to the D-glucose 6-phosphate binding site. UDP-alpha-D-glucose contacts are provided by residues Phe-340 and 366–370; that span reads LVAKE.

The protein belongs to the glycosyltransferase 20 family. In terms of assembly, homotetramer.

The enzyme catalyses D-glucose 6-phosphate + UDP-alpha-D-glucose = alpha,alpha-trehalose 6-phosphate + UDP + H(+). Its pathway is glycan biosynthesis; trehalose biosynthesis. In terms of biological role, probably involved in the osmoprotection via the biosynthesis of trehalose. Catalyzes the transfer of glucose from UDP-alpha-D-glucose (UDP-Glc) to D-glucose 6-phosphate (Glc-6-P) to form trehalose-6-phosphate. Acts with retention of the anomeric configuration of the UDP-sugar donor. The chain is Trehalose-6-phosphate synthase from Shigella dysenteriae serotype 1 (strain Sd197).